Here is a 500-residue protein sequence, read N- to C-terminus: Aldehyde dehydrogenase, mitochondrial (500 aa).

An N6-acetyllysine mark is found at Lys35, Lys56, and Lys142. 245 to 250 (GSTEVG) serves as a coordination point for NAD(+). Glu268 serves as the catalytic Proton acceptor. The active-site Nucleophile is the Cys302. N6-acetyllysine occurs at positions 358, 366, 409, 411, 424, and 434.

The protein belongs to the aldehyde dehydrogenase family. As to quaternary structure, homotetramer. In response to mitochondrial stress, the precursor protein is ubiquitinated by the SIFI complex in the cytoplasm before mitochondrial import, leading to its degradation. Within the SIFI complex, UBR4 initiates ubiquitin chain that are further elongated or branched by KCMF1.

It localises to the mitochondrion matrix. It catalyses the reaction an aldehyde + NAD(+) + H2O = a carboxylate + NADH + 2 H(+). It participates in alcohol metabolism; ethanol degradation; acetate from ethanol: step 2/2. Its function is as follows. Required for clearance of cellular formaldehyde, a cytotoxic and carcinogenic metabolite that induces DNA damage. This is Aldehyde dehydrogenase, mitochondrial (ALDH2) from Equus caballus (Horse).